Reading from the N-terminus, the 396-residue chain is NADH-quinone oxidoreductase subunit D (396 aa).

It belongs to the complex I 49 kDa subunit family. In terms of assembly, NDH-1 is composed of 14 different subunits. Subunits NuoB, C, D, E, F, and G constitute the peripheral sector of the complex.

Its subcellular location is the cell inner membrane. The enzyme catalyses a quinone + NADH + 5 H(+)(in) = a quinol + NAD(+) + 4 H(+)(out). Its function is as follows. NDH-1 shuttles electrons from NADH, via FMN and iron-sulfur (Fe-S) centers, to quinones in the respiratory chain. The immediate electron acceptor for the enzyme in this species is believed to be ubiquinone. Couples the redox reaction to proton translocation (for every two electrons transferred, four hydrogen ions are translocated across the cytoplasmic membrane), and thus conserves the redox energy in a proton gradient. This Methylobacterium sp. (strain 4-46) protein is NADH-quinone oxidoreductase subunit D.